Reading from the N-terminus, the 192-residue chain is Large ribosomal subunit protein uL3 (192 aa).

This sequence belongs to the universal ribosomal protein uL3 family. In terms of assembly, part of the 50S ribosomal subunit. Forms a cluster with proteins L14 and L19.

Functionally, one of the primary rRNA binding proteins, it binds directly near the 3'-end of the 23S rRNA, where it nucleates assembly of the 50S subunit. The polypeptide is Large ribosomal subunit protein uL3 (rplC) (Helicobacter hepaticus (strain ATCC 51449 / 3B1)).